The chain runs to 56 residues: Large ribosomal subunit protein bL33 (56 aa).

The protein belongs to the bacterial ribosomal protein bL33 family.

The sequence is that of Large ribosomal subunit protein bL33 from Tropheryma whipplei (strain TW08/27) (Whipple's bacillus).